A 307-amino-acid chain; its full sequence is Acetaldehyde dehydrogenase (307 aa).

12–15 (SGNI) is a binding site for NAD(+). Cys127 functions as the Acyl-thioester intermediate in the catalytic mechanism. Residues 158-166 (SAGPGTRQN) and Asn278 contribute to the NAD(+) site.

It belongs to the acetaldehyde dehydrogenase family. Monomer. Can also form a heterotetramer composed of two aldolase (TTHB246) and two dehydrogenase (TTHB247) subunits. Upon complex formation, the aldolase shows a 5-fold increase in substrate affinity, while the dehydrogenase shows a 3-fold decrease; the kcat values of each enzyme are reduced by 2-fold when they are in a complex.

It carries out the reaction acetaldehyde + NAD(+) + CoA = acetyl-CoA + NADH + H(+). The catalysed reaction is propanal + NAD(+) + CoA = propanoyl-CoA + NADH + H(+). Catalyzes the conversion of acetaldehyde or propanal to acetyl-CoA or propanoyl-CoA, respectively, using NAD(+) and coenzyme A. The aldehyde substrates can be directly channeled from the aldolase TTHB246 to the dehydrogenase TTHB247. Is the final enzyme in the meta-cleavage pathway for the degradation of aromatic compounds. The sequence is that of Acetaldehyde dehydrogenase from Thermus thermophilus (strain ATCC 27634 / DSM 579 / HB8).